We begin with the raw amino-acid sequence, 61 residues long: Alpha-conotoxin-like Tx1.2 (61 aa).

Residues 1–20 (MFTVFLLVVLATTVVSFTSG) form the signal peptide. A propeptide spanning residues 21-42 (RSTFRGRNAAAKASGLVSLTDR) is cleaved from the precursor. Proline 44 and proline 50 each carry 4-hydroxyproline. 2 disulfide bridges follow: cysteine 46–cysteine 52 and cysteine 47–cysteine 60. The tract at residues 48-50 (SHP) is ser-Xaa-Pro motif, crucial for potent interaction with nAChR.

The protein belongs to the conotoxin A superfamily. In terms of tissue distribution, expressed by the venom duct.

It is found in the secreted. Its function is as follows. Alpha-conotoxins act on postsynaptic membranes, they bind to the nicotinic acetylcholine receptors (nAChR) and thus inhibit them. This toxin also inhibits high voltage-activated (HVA) calcium channel currents in rat DRG neurons (8% inhibition at 1 uM toxin) probably by activating GABA(B) receptors (GABBR1 and/or GABBR2). The sequence is that of Alpha-conotoxin-like Tx1.2 from Conus textile (Cloth-of-gold cone).